We begin with the raw amino-acid sequence, 570 residues long: MSVLYSSSSKQFSSSRSGGGGGGGSVRVSSTRGSLGGGYSSGGFSGGSFSRGSSGGGCFGGSSGGYGGFGGGGSFGGGYGGSSFGGGYGGSSFGGGYGGSSFGGAGFGGGGSFGGGSFGGGSYGGGFGGGGFGGDGGSLLSGNGRVTMQNLNDRLASYMDKVRALEESNYELEGKIKEWYEKHGNSSQREPRDYSKYYKTIEDLKGQILTLTTDNANVLLQIDNARLAADDFRLKYENEVTLRQSVEADINGLRRVLDELTLSKSDLEMQIESLNEELAYLKKNHEEEMRDLQNVSTGDVNVEMNAAPGVDLTQLLNNMRNQYEQLAEKNRKDAEEWFNQKSKELTTEIDSNIEQMSSHKSEITELRRTVQGLEIELQSQLALKQSLEASLAETEGRYCVQLSQIQSQISALEEQLQQIRAETECQNAEYQQLLDIKTRLENEIQTYRSLLEGEGSSSGGGGGRRGGSGGGSYGGSSGGGSYGGSSGGGGSYGGSSGGGGSYGGGSSGGGSHGGSSGGGYGGGSSSGGAGGHGGSSGGGYGGGSSSGGQGGSGGFKSSGGGDQSSKGPRY.

Residues 1–16 show a composition bias toward low complexity; it reads MSVLYSSSSKQFSSSR. A disordered region spans residues 1-29; that stretch reads MSVLYSSSSKQFSSSRSGGGGGGGSVRVS. Positions 1-143 are head; it reads MSVLYSSSSK…GDGGSLLSGN (143 aa). 2 positions are modified to phosphoserine: Ser15 and Ser17. Position 32 is an asymmetric dimethylarginine; alternate (Arg32). Arg32 carries the omega-N-methylarginine; alternate modification. Phosphoserine occurs at positions 34, 45, 48, and 168. The tract at residues 144 to 179 is coil 1A; the sequence is GRVTMQNLNDRLASYMDKVRALEESNYELEGKIKEW. An IF rod domain is found at 144–458; it reads GRVTMQNLND…SLLEGEGSSS (315 aa). A linker 1 region spans residues 180–200; that stretch reads YEKHGNSSQREPRDYSKYYKT. Residues 201–292 form a coil 1B region; sequence IEDLKGQILT…KNHEEEMRDL (92 aa). The tract at residues 293-315 is linker 12; the sequence is QNVSTGDVNVEMNAAPGVDLTQL. Positions 316–454 are coil 2; the sequence is LNNMRNQYEQ…QTYRSLLEGE (139 aa). The tract at residues 451-570 is disordered; the sequence is LEGEGSSSGG…GDQSSKGPRY (120 aa). The tail stretch occupies residues 455 to 570; it reads GSSSGGGGGR…GDQSSKGPRY (116 aa). The segment covering 456–562 has biased composition (gly residues); it reads SSSGGGGGRR…GGFKSSGGGD (107 aa).

The protein belongs to the intermediate filament family. In terms of assembly, (Microbial infection) Interacts (via C-terminal tail domain) with the S.aureus clumping factor, clfB; this interaction probably mediates S.aureus attachment to the highly keratinized squamous epithelial cells from the nasal cavity. Heterotetramer of two type I and two type II keratins. Heterodimer with KRT1. Two heterodimers of KRT1 and KRT10 form a heterotetramer. The KRT10 subunit in the heterotetramer is probably disulfide-linked. Interacts with PLEC isoform 1C, when in a heterodimer with KRT1. As to quaternary structure, (Microbial infection) Interacts (via the C-terminal tail domain) with S.pneumoniae serine-rich repeat protein PsrP; this interaction probably mediates S.pneumoniae adherence to lung tissue and subsequent pathogenesis. Expressed in the suprabasal layers of the epidermis throughout the entire sole (at protein level). Expressed in the infundibular regions of the ear, the interscale regions of the tail, and the interfollicular epidermis of the back. Expressed in lung tissue from young mice (at protein level).

It localises to the secreted. The protein localises to the extracellular space. It is found in the cell surface. The protein resides in the cytoplasm. Plays a role in the establishment of the epidermal barrier on plantar skin. Involved in the maintenance of cell layer development and keratin filament bundles in suprabasal cells of the epithelium. Its function is as follows. (Microbial infection) Acts as a mediator of S.aureus adherence to desquamated nasal epithelial cells via clfB, and hence may play a role in nasal colonization. In terms of biological role, (Microbial infection) Binds S.pneumoniae PsrP, mediating adherence of the bacteria to lung cell lines. This is Keratin, type I cytoskeletal 10 (Krt10) from Mus musculus (Mouse).